The following is a 370-amino-acid chain: 3-dehydroquinate synthase (370 aa).

Residues 108 to 112, 132 to 133, Lys145, and Lys154 each bind NAD(+); these read GVVGD and TT. Residues Glu187, His250, and His268 each coordinate Zn(2+).

This sequence belongs to the sugar phosphate cyclases superfamily. Dehydroquinate synthase family. Requires Co(2+) as cofactor. It depends on Zn(2+) as a cofactor. NAD(+) is required as a cofactor.

Its subcellular location is the cytoplasm. The enzyme catalyses 7-phospho-2-dehydro-3-deoxy-D-arabino-heptonate = 3-dehydroquinate + phosphate. It participates in metabolic intermediate biosynthesis; chorismate biosynthesis; chorismate from D-erythrose 4-phosphate and phosphoenolpyruvate: step 2/7. Its function is as follows. Catalyzes the conversion of 3-deoxy-D-arabino-heptulosonate 7-phosphate (DAHP) to dehydroquinate (DHQ). The protein is 3-dehydroquinate synthase of Caulobacter vibrioides (strain NA1000 / CB15N) (Caulobacter crescentus).